The following is a 476-amino-acid chain: uncharacterized protein (476 aa).

A LisH domain is found at 7–39 (SRFYTNLLIANYLKHNGLEDTLAAFIRETALPL).

This is an uncharacterized protein from Saccharomyces cerevisiae (strain ATCC 204508 / S288c) (Baker's yeast).